The primary structure comprises 391 residues: Cilia- and flagella-associated protein 263 (391 aa).

The disordered stretch occupies residues 1 to 21 (MTDDDSETSASETQAQEESDL). 2 coiled-coil regions span residues 95–243 (LSVD…NQEL) and 294–369 (LRKE…LKGY).

This sequence belongs to the CFAP263 family. In terms of assembly, forms a complex with CFAP184; the interaction is required for functional activity in cilia. Interacts with HAP1 and PCM1.

It is found in the cytoplasm. It localises to the cytoskeleton. Its subcellular location is the microtubule organizing center. The protein resides in the centrosome. The protein localises to the centriolar satellite. It is found in the cell projection. It localises to the cilium. Its function is as follows. Component of centriolar satellites contributing to primary cilium formation. In complex with CFAP263, acts as a regulator of ciliary beating that connects radial spoke 3 (RS3) to the inner dynein arm (IDA) and the nexin-dynein regulatory complex (N-DRC). The complex is positioned parallel to N-DRC and forms a connection between the arch at the base of RS3, the IDA tail and N-DRC. The chain is Cilia- and flagella-associated protein 263 (CFAP263) from Bos taurus (Bovine).